The primary structure comprises 360 residues: Peptide chain release factor 1 (360 aa).

The residue at position 235 (Gln235) is an N5-methylglutamine. Residues 284 to 304 (KVDSERSADRKSQVGSGDRSE) form a disordered region.

It belongs to the prokaryotic/mitochondrial release factor family. Methylated by PrmC. Methylation increases the termination efficiency of RF1.

Its subcellular location is the cytoplasm. Peptide chain release factor 1 directs the termination of translation in response to the peptide chain termination codons UAG and UAA. The sequence is that of Peptide chain release factor 1 from Agrobacterium fabrum (strain C58 / ATCC 33970) (Agrobacterium tumefaciens (strain C58)).